The primary structure comprises 274 residues: Ribosomal RNA small subunit methyltransferase A (274 aa).

6 residues coordinate S-adenosyl-L-methionine: N28, L30, G55, E77, D103, and N122.

Belongs to the class I-like SAM-binding methyltransferase superfamily. rRNA adenine N(6)-methyltransferase family. RsmA subfamily.

The protein resides in the cytoplasm. It carries out the reaction adenosine(1518)/adenosine(1519) in 16S rRNA + 4 S-adenosyl-L-methionine = N(6)-dimethyladenosine(1518)/N(6)-dimethyladenosine(1519) in 16S rRNA + 4 S-adenosyl-L-homocysteine + 4 H(+). Its function is as follows. Specifically dimethylates two adjacent adenosines (A1518 and A1519) in the loop of a conserved hairpin near the 3'-end of 16S rRNA in the 30S particle. May play a critical role in biogenesis of 30S subunits. This Rhizobium meliloti (strain 1021) (Ensifer meliloti) protein is Ribosomal RNA small subunit methyltransferase A.